The following is a 637-amino-acid chain: tRNA 5-methylaminomethyl-2-thiouridine biosynthesis bifunctional protein MnmC (637 aa).

Residues 1–232 form a tRNA (mnm(5)s(2)U34)-methyltransferase region; that stretch reads MPERIEWLED…KRDNLQGEFN (232 aa). The segment at 255–637 is FAD-dependent cmnm(5)s(2)U34 oxidoreductase; sequence IGAGLAGAAV…YGEAKLVSED (383 aa).

This sequence in the N-terminal section; belongs to the methyltransferase superfamily. tRNA (mnm(5)s(2)U34)-methyltransferase family. It in the C-terminal section; belongs to the DAO family. Requires FAD as cofactor.

The protein resides in the cytoplasm. The enzyme catalyses 5-aminomethyl-2-thiouridine(34) in tRNA + S-adenosyl-L-methionine = 5-methylaminomethyl-2-thiouridine(34) in tRNA + S-adenosyl-L-homocysteine + H(+). In terms of biological role, catalyzes the last two steps in the biosynthesis of 5-methylaminomethyl-2-thiouridine (mnm(5)s(2)U) at the wobble position (U34) in tRNA. Catalyzes the FAD-dependent demodification of cmnm(5)s(2)U34 to nm(5)s(2)U34, followed by the transfer of a methyl group from S-adenosyl-L-methionine to nm(5)s(2)U34, to form mnm(5)s(2)U34. The protein is tRNA 5-methylaminomethyl-2-thiouridine biosynthesis bifunctional protein MnmC of Polaromonas sp. (strain JS666 / ATCC BAA-500).